Here is a 102-residue protein sequence, read N- to C-terminus: uncharacterized protein (102 aa).

2 helical membrane passes run 24–44 (AFIVPSAIFFFVFYFSLPVLT) and 55–75 (IGAVSWAWLFAIAQFAMTWIL).

The protein resides in the cell membrane. This is an uncharacterized protein from Bacillus subtilis (strain 168).